A 320-amino-acid polypeptide reads, in one-letter code: Methionyl-tRNA formyltransferase (320 aa).

Ser-111–Pro-114 lines the (6S)-5,6,7,8-tetrahydrofolate pocket.

Belongs to the Fmt family.

It catalyses the reaction L-methionyl-tRNA(fMet) + (6R)-10-formyltetrahydrofolate = N-formyl-L-methionyl-tRNA(fMet) + (6S)-5,6,7,8-tetrahydrofolate + H(+). Functionally, attaches a formyl group to the free amino group of methionyl-tRNA(fMet). The formyl group appears to play a dual role in the initiator identity of N-formylmethionyl-tRNA by promoting its recognition by IF2 and preventing the misappropriation of this tRNA by the elongation apparatus. In Bifidobacterium adolescentis (strain ATCC 15703 / DSM 20083 / NCTC 11814 / E194a), this protein is Methionyl-tRNA formyltransferase.